The sequence spans 271 residues: Putative hydro-lyase jk0403 (271 aa).

It belongs to the D-glutamate cyclase family.

This is Putative hydro-lyase jk0403 from Corynebacterium jeikeium (strain K411).